The primary structure comprises 1887 residues: MIFQSFLLGNLVSLCMKIINSVVVVGLYYGFLTTFSIGPSYLFLLRALVMEEGTEKKVSATTGFITGQLMMFISIYYAPLHLALGRPHTITVLALPYLLFHFFWNNHKHFFDYGSTTRNSMRNLSIQCVFLNNLIFQLFNHFILPSSMLARLVNIYLFRCNNKILFVTSGFVGWLIGHILFMKWLGLVLVWIRQNHSIRSNKYIRSNKYLVLELRNSMARIFSILLFITCVYYLGRIPSPILTKKLKEASKTEERVESEEERDVEIETASEMKGTKQEQEGSTEEDPYPSPSLFSEEGWDPDKIDETEEIRVNGKDKIKDKFHSHLTETGYNNINTSNSPIYDYQDSYLNNNNTGNLENFKLQLLDKKNENQDLFWFQKPLVSLLFDYNRWNRPFRYIKNNRFEQAVRTEMSQYFFDTCKSDGKQRISFTYPPSLSTFWKMIKRKIPLLSLQKTLPNKLDTQWVSTNKEKSNNLNKEFLNRLEILDKESLSMDILETRTRLCNDDTKKEYVPKMYDPLLNGPYRGTIKKGVSSSIINNTLLENWEKRVRLNRIHTIFLPNIDYQEFEQKAYTIDKKPLSTEIDEFLTLINELGNEPKSSLNVKGLSLFSDQEQRRAKSENRTKFVKFVFNAIDPNEPKSGKKSIGIKEISKKVPRWSHKLITELDQQMGEFQDRASIDHQLRSRKAKRVVIFTDNNATNDPEEEVALISYSQQSDFRRGIIKGSMRAQRRKTFISKLFQANVHSPLFVDRITPLRLFSFDISELIKPIFRNWTGKEREFKILESREEQTKREEKKEKDKKEDNKRKEQARIAIEEAWDNIPFAQIIRGYMLITQSILRKYILLPSLIIAKNLGRMLFLQLPEWSEDLQEWNREMQIKCTYNGVQLSETEFPKDWLRDGIQIKILFPFCLKPWHISKLYPSRGELMKKKKQKDDFCFLTVWGMEAELPFGSPRKRPSFFEPIFKELEKKIGKFKKKYFLTLKILKGKTKLFRSVSKETKKWFIQSIGFLKKIKKELSKVNPIVLFRFKEISESNETKKEKDYLISNQIINESFSQIESGNWPNSSLIEKKMKDLTDRTSTIKNQIERITKEKKKVTPEIDINPNKTNNIKKLESPKKFFQILKSRNTRVIWKFHYFLKLFIQRLYIDLFLSIINIPRITTQLFLESTNKLIEKFISNNEINQEKITNKKKIHFIFISTIKKSLYNISKKNSHIFCDLSYLSQAYVFYKLSQTQVINLSKFRSVLQYNTTSCFLKTKIKDYFKKLGIFHSELKHKKLQSYRINQWKNWLRWHYQYDLSQIRWSRLMPKKWRTRVNQSCMAQNKNRNLNKWNSYEKDQLIHYKKENDSELYSLSNQKDNFKKCYRYGLLAYKSINYENKSDSFFSRLPFQVKKNLEISYNSNTSKHNFVDMPVNLHINNYLRKVNILDIERNLDRKYFDWKIIHFSLRQKGDIEAWVKIDTNSNPNTKIGINNYQIIDKIEKKGVFYLTTHQNPEKTQKNSKKVFFDWMGMNEKIFNRPILNLEFWFFPEFVLLYNVYKIKPWIIPSKFLLFNLNTNENVIQNKNQKQNFFLPSNKKIKNRSQETKEPPSQRERGSDIENKGNLSPVFSKHQTDLEKDYVESDTKKGQNKKQYKSNTEAELDLFLKRYLLFQLRWNDALNQRMLENIKVYCLLLRLINPTKITISSIQRREMSLDIMLIQANLPLTDLMKKGVLIIEPIRLSVKHNGQFIMYQTIGISLVHKSKHQTNQRYREQRYVDKKNFDEFILQPQTQRINTEKTHFDLLVPENILWSRRRRELRIRSFFNSLNWNVVDRNSVFCNETNVKNWSQFLGERKPLYKDKNELIKFKFFLWPNYRLEDLACMNRYWFDTNNGSRFSILRIHMYPRLKIN.

6 helical membrane passes run 18 to 38 (IINS…FSIG), 64 to 84 (FITG…HLAL), 87 to 107 (PHTI…WNNH), 124 to 144 (LSIQ…HFIL), 172 to 192 (VGWL…LVWI), and 221 to 241 (IFSI…PSPI). 3 disordered regions span residues 248-300 (EASK…EGWD), 786-805 (EEQT…DNKR), and 1569-1603 (LPSN…NLSP). Positions 256–268 (VESEEERDVEIET) are enriched in acidic residues. A coiled-coil region spans residues 775 to 816 (KEREFKILESREEQTKREEKKEKDKKEDNKRKEQARIAIEEA). Basic and acidic residues predominate over residues 1578–1597 (RSQETKEPPSQRERGSDIEN).

Belongs to the TIC214 family. As to quaternary structure, part of the Tic complex.

The protein resides in the plastid. It localises to the chloroplast inner membrane. In terms of biological role, involved in protein precursor import into chloroplasts. May be part of an intermediate translocation complex acting as a protein-conducting channel at the inner envelope. The protein is Protein TIC 214 of Solanum bulbocastanum (Wild potato).